Consider the following 135-residue polypeptide: Large ribosomal subunit protein uL16c (135 aa).

The segment covering 1–17 (MLSPKRTKFRKQHRNRM) has biased composition (basic residues). A disordered region spans residues 1–22 (MLSPKRTKFRKQHRNRMNGKAS).

The protein belongs to the universal ribosomal protein uL16 family. Part of the 50S ribosomal subunit.

It is found in the plastid. It localises to the chloroplast. The chain is Large ribosomal subunit protein uL16c from Gracilaria tenuistipitata (Red alga).